We begin with the raw amino-acid sequence, 757 residues long: Elongation factor G, mitochondrial (757 aa).

The tr-type G domain occupies 66 to 344 (DRMRNIGISA…VLDYLPCPME (279 aa)). GTP-binding positions include 75–82 (AHIDSGKT), 142–146 (DTPGH), and 196–199 (NKLD).

The protein belongs to the TRAFAC class translation factor GTPase superfamily. Classic translation factor GTPase family. EF-G/EF-2 subfamily.

The protein resides in the mitochondrion. The protein operates within protein biosynthesis; polypeptide chain elongation. Functionally, mitochondrial GTPase that catalyzes the GTP-dependent ribosomal translocation step during translation elongation. During this step, the ribosome changes from the pre-translocational (PRE) to the post-translocational (POST) state as the newly formed A-site-bound peptidyl-tRNA and P-site-bound deacylated tRNA move to the P and E sites, respectively. Catalyzes the coordinated movement of the two tRNA molecules, the mRNA and conformational changes in the ribosome. This is Elongation factor G, mitochondrial from Oryza sativa subsp. japonica (Rice).